We begin with the raw amino-acid sequence, 558 residues long: SPATS2-like protein (558 aa).

Alanine 2 carries the post-translational modification N-acetylalanine. Residues 63 to 79 are compositionally biased toward basic residues; sequence GKKKNNKRKRSKSKQHQ. Residues 63–204 form a disordered region; it reads GKKKNNKRKR…SPVKSNAPAA (142 aa). Composition is skewed to basic and acidic residues over residues 80–92 and 110–142; these read GNKDAKDKVERPE and GCEKDSSSPDSTREKLALTPREKKISILEEPPR. Serine 120 carries the phosphoserine modification. Residues 279 to 344 adopt a coiled-coil conformation; it reads KEEAMDILTA…ARFSCDIEQL (66 aa). 2 disordered regions span residues 385–406 and 421–514; these read GNFARKSSGHNKPSEGKAANPK and TMPT…RQHA. Residues 421–433 show a composition bias toward polar residues; sequence TMPTNKQQNGPSS. Basic residues predominate over residues 469 to 485; that stretch reads HEHRRQPHNGFRPKNKG.

This sequence belongs to the SPATS2 family.

The protein resides in the cytoplasm. Its subcellular location is the nucleus. It is found in the nucleolus. This is SPATS2-like protein (Spats2l) from Mus musculus (Mouse).